A 204-amino-acid polypeptide reads, in one-letter code: LexA repressor (204 aa).

Residues 27–47 (VREIGEAVGLASSSTVHGHLA) constitute a DNA-binding region (H-T-H motif). Catalysis depends on for autocatalytic cleavage activity residues Ser-126 and Lys-164.

Belongs to the peptidase S24 family. As to quaternary structure, homodimer.

It catalyses the reaction Hydrolysis of Ala-|-Gly bond in repressor LexA.. Represses a number of genes involved in the response to DNA damage (SOS response), including recA and lexA. In the presence of single-stranded DNA, RecA interacts with LexA causing an autocatalytic cleavage which disrupts the DNA-binding part of LexA, leading to derepression of the SOS regulon and eventually DNA repair. This Listeria monocytogenes serotype 4b (strain CLIP80459) protein is LexA repressor.